Reading from the N-terminus, the 239-residue chain is Diablo IAP-binding mitochondrial protein (239 aa).

The transit peptide at 1-22 directs the protein to the mitochondrion; that stretch reads MAVLKSWLSRSVTLLFRYRQCL. The IAP-binding signature appears at 56-60; the sequence is AVPIA. The segment at 217–239 is disordered; sequence RQKTQEEGEERAESEQEAYLRED.

This sequence belongs to the Smac/DIABLO protein family. Homodimer. Interacts with BEX3. Interacts with BIRC2/c-IAP1 (via BIR3 domain). Interacts with BIRC6/BRUCE. Interacts with BIRC7/livin. Interacts with XIAP/BIRC4 (via BIR3 domain). Interacts with the monomeric and dimeric form of BIRC5/survivin. Interacts with AREL1 (via HECT domain); in the cytoplasm following induction of apoptosis. Post-translationally, ubiquitinated by BIRC7/livin. Ubiquitinated by BIRC6. The precursor form is proteolytically cleaved by mitochondrial processing peptidase MPP to remove the transit peptide and produce an intermediate form. This is then processed by PARL to produce the mature cleaved form which is released from mitochondria into the cytosol in apoptotic cells.

The protein localises to the mitochondrion. Its subcellular location is the cytoplasm. It is found in the cytosol. Its function is as follows. Promotes apoptosis by activating caspases in the cytochrome c/Apaf-1/caspase-9 pathway. Acts by opposing the inhibitory activity of inhibitor of apoptosis proteins (IAP). Inhibits the activity of BIRC6/BRUCE by inhibiting its binding to caspases. In Pongo abelii (Sumatran orangutan), this protein is Diablo IAP-binding mitochondrial protein.